The chain runs to 118 residues: uncharacterized protein (118 aa).

2 helical membrane passes run 5–25 (AFFN…SMVI) and 40–57 (FLTF…QHYI).

It is found in the membrane. This is an uncharacterized protein from African swine fever virus (strain Badajoz 1971 Vero-adapted) (Ba71V).